Reading from the N-terminus, the 341-residue chain is Ferrochelatase (341 aa).

Histidine 189 and glutamate 293 together coordinate Fe cation.

The protein belongs to the ferrochelatase family.

It localises to the cytoplasm. The enzyme catalyses heme b + 2 H(+) = protoporphyrin IX + Fe(2+). The protein operates within porphyrin-containing compound metabolism; protoheme biosynthesis; protoheme from protoporphyrin-IX: step 1/1. Functionally, catalyzes the ferrous insertion into protoporphyrin IX. In Pseudomonas fluorescens (strain Pf0-1), this protein is Ferrochelatase.